We begin with the raw amino-acid sequence, 483 residues long: UDP-N-acetylmuramoyl-L-alanyl-D-glutamate--2,6-diaminopimelate ligase 2 (483 aa).

S30 contacts UDP-N-acetyl-alpha-D-muramoyl-L-alanyl-D-glutamate. G111–T117 is an ATP binding site. Residues T156–T157, T183, and R191 contribute to the UDP-N-acetyl-alpha-D-muramoyl-L-alanyl-D-glutamate site. K223 carries the post-translational modification N6-carboxylysine. Meso-2,6-diaminopimelate contacts are provided by residues R380, D404–R407, G456, and E460. Residues D404–R407 carry the Meso-diaminopimelate recognition motif motif.

The protein belongs to the MurCDEF family. MurE subfamily. It depends on Mg(2+) as a cofactor. In terms of processing, carboxylation is probably crucial for Mg(2+) binding and, consequently, for the gamma-phosphate positioning of ATP.

The protein resides in the cytoplasm. The enzyme catalyses UDP-N-acetyl-alpha-D-muramoyl-L-alanyl-D-glutamate + meso-2,6-diaminopimelate + ATP = UDP-N-acetyl-alpha-D-muramoyl-L-alanyl-gamma-D-glutamyl-meso-2,6-diaminopimelate + ADP + phosphate + H(+). The protein operates within cell wall biogenesis; peptidoglycan biosynthesis. Catalyzes the addition of meso-diaminopimelic acid to the nucleotide precursor UDP-N-acetylmuramoyl-L-alanyl-D-glutamate (UMAG) in the biosynthesis of bacterial cell-wall peptidoglycan. The chain is UDP-N-acetylmuramoyl-L-alanyl-D-glutamate--2,6-diaminopimelate ligase 2 from Clostridium acetobutylicum (strain ATCC 824 / DSM 792 / JCM 1419 / IAM 19013 / LMG 5710 / NBRC 13948 / NRRL B-527 / VKM B-1787 / 2291 / W).